We begin with the raw amino-acid sequence, 166 residues long: uncharacterized protein (166 aa).

The tract at residues 1 to 58 (MSSEITEGDLQKFHDEHFNAKAVNLWNVAFAQNDRGGNSESANVEYTQSVERYPDGTI) is may interact with smn1.

In terms of assembly, part of the core SMN complex at least composed of smn1, yip11/gem2, gem6, gem7 and gem8. Interacts with smn1; the interaction is direct. Interacts with gem7; the interaction is direct.

It localises to the cytoplasm. It is found in the nucleus. Its function is as follows. The SMN complex catalyzes the assembly of small nuclear ribonucleoproteins (snRNPs), the building blocks of the spliceosome, and thereby plays an important role in the splicing of cellular pre-mRNAs. Most spliceosomal snRNPs contain a common set of Sm proteins SNRPB, SNRPD1, SNRPD2, SNRPD3, SNRPE, SNRPF and SNRPG that assemble in a heptameric protein ring on the Sm site of the small nuclear RNA to form the core snRNP (Sm core). In the cytosol, the Sm proteins SNRPD1, SNRPD2, SNRPE, SNRPF and SNRPG are trapped in an inactive 6S pICln-Sm complex by the chaperone CLNS1A that controls the assembly of the core snRNP. To assemble core snRNPs, the SMN complex accepts the trapped 5Sm proteins from CLNS1A forming an intermediate. Binding of snRNA inside 5Sm triggers eviction of the SMN complex, thereby allowing binding of SNRPD3 and SNRPB to complete assembly of the core snRNP. This is an uncharacterized protein from Schizosaccharomyces pombe (strain 972 / ATCC 24843) (Fission yeast).